The chain runs to 117 residues: UPF0342 protein lwe2240 (117 aa).

The protein belongs to the UPF0342 family.

This is UPF0342 protein lwe2240 from Listeria welshimeri serovar 6b (strain ATCC 35897 / DSM 20650 / CCUG 15529 / CIP 8149 / NCTC 11857 / SLCC 5334 / V8).